The following is a 154-amino-acid chain: Large ribosomal subunit protein bL17 (154 aa).

The tract at residues 127–154 (TAAKQDRAKRVKGSKKAETEKEGGESAE) is disordered. Over residues 141-154 (KKAETEKEGGESAE) the composition is skewed to basic and acidic residues.

This sequence belongs to the bacterial ribosomal protein bL17 family. Part of the 50S ribosomal subunit. Contacts protein L32.

This Chlorobaculum parvum (strain DSM 263 / NCIMB 8327) (Chlorobium vibrioforme subsp. thiosulfatophilum) protein is Large ribosomal subunit protein bL17.